A 276-amino-acid chain; its full sequence is Bis(5'-nucleosyl)-tetraphosphatase, symmetrical (276 aa).

Belongs to the Ap4A hydrolase family.

The catalysed reaction is P(1),P(4)-bis(5'-adenosyl) tetraphosphate + H2O = 2 ADP + 2 H(+). Functionally, hydrolyzes diadenosine 5',5'''-P1,P4-tetraphosphate to yield ADP. This is Bis(5'-nucleosyl)-tetraphosphatase, symmetrical from Tolumonas auensis (strain DSM 9187 / NBRC 110442 / TA 4).